The following is a 1466-amino-acid chain: Retrovirus-related Pol polyprotein from transposon RE1 (1466 aa).

The tract at residues 227-270 (SHRNTTTTNNNNNGNRNNRYDNRNNNNNSKPWQQSSTNFHPNNN) is disordered. Over residues 229–254 (RNTTTTNNNNNGNRNNRYDNRNNNNN) the composition is skewed to low complexity. The span at 255 to 270 (SKPWQQSSTNFHPNNN) shows a compositional bias: polar residues. The CCHC-type zinc finger occupies 278-294 (KCQICGVQGHSAKRCSQ). Asp-334 acts as the For protease activity in catalysis. Residues 519-682 (NSTRPLEYIY…SPFQKLFGTS (164 aa)) form the Integrase catalytic domain. Residues Asp-530 and Asp-592 each coordinate Mg(2+). The tract at residues 772 to 927 (WSPHTTLPTR…NNNQAPLNTH (156 aa)) is disordered. 2 stretches are compositionally biased toward low complexity: residues 796 to 827 (AATPPSSPSAPFRNSQVSSSNLDSSFSSSFPS) and 836 to 898 (QNGP…SSTS). The segment covering 899-912 (PTPPSILIHPPPPL) has biased composition (pro residues). The span at 915-927 (IVNNNNQAPLNTH) shows a compositional bias: polar residues. Residues 982–1225 (NHTWDLVPPP…ITAKPVTTPM (244 aa)) form the Reverse transcriptase Ty1/copia-type domain.

The enzyme catalyses DNA(n) + a 2'-deoxyribonucleoside 5'-triphosphate = DNA(n+1) + diphosphate. The sequence is that of Retrovirus-related Pol polyprotein from transposon RE1 (RE1) from Arabidopsis thaliana (Mouse-ear cress).